The primary structure comprises 418 residues: UDP-N-acetylglucosamine 1-carboxyvinyltransferase (418 aa).

Lys-22–Asn-23 lines the phosphoenolpyruvate pocket. UDP-N-acetyl-alpha-D-glucosamine is bound at residue Arg-91. Cys-115 (proton donor) is an active-site residue. Residue Cys-115 is modified to 2-(S-cysteinyl)pyruvic acid O-phosphothioketal. UDP-N-acetyl-alpha-D-glucosamine contacts are provided by residues Arg-120 to Leu-124, Asp-305, and Ile-327.

Belongs to the EPSP synthase family. MurA subfamily.

Its subcellular location is the cytoplasm. The enzyme catalyses phosphoenolpyruvate + UDP-N-acetyl-alpha-D-glucosamine = UDP-N-acetyl-3-O-(1-carboxyvinyl)-alpha-D-glucosamine + phosphate. It participates in cell wall biogenesis; peptidoglycan biosynthesis. Functionally, cell wall formation. Adds enolpyruvyl to UDP-N-acetylglucosamine. This Wigglesworthia glossinidia brevipalpis protein is UDP-N-acetylglucosamine 1-carboxyvinyltransferase.